The chain runs to 172 residues: 3-phenylpropionate/cinnamic acid dioxygenase subunit beta (172 aa).

This sequence belongs to the bacterial ring-hydroxylating dioxygenase beta subunit family. In terms of assembly, this dioxygenase system consists of four proteins: the two subunits of the hydroxylase component (HcaE and HcaF), a ferredoxin (HcaC) and a ferredoxin reductase (HcaD).

It catalyses the reaction 3-phenylpropanoate + NADH + O2 + H(+) = 3-(cis-5,6-dihydroxycyclohexa-1,3-dien-1-yl)propanoate + NAD(+). The enzyme catalyses (E)-cinnamate + NADH + O2 + H(+) = (2E)-3-(cis-5,6-dihydroxycyclohexa-1,3-dien-1-yl)prop-2-enoate + NAD(+). The protein operates within aromatic compound metabolism; 3-phenylpropanoate degradation. Functionally, part of the multicomponent 3-phenylpropionate dioxygenase. Converts 3-phenylpropionic acid (PP) and cinnamic acid (CI) into 3-phenylpropionate-dihydrodiol (PP-dihydrodiol) and cinnamic acid-dihydrodiol (CI-dihydrodiol), respectively. The sequence is that of 3-phenylpropionate/cinnamic acid dioxygenase subunit beta from Shigella sonnei (strain Ss046).